A 55-amino-acid polypeptide reads, in one-letter code: ATP synthase F(0) complex subunit 8 (55 aa).

A helical membrane pass occupies residues 4–24 (LNPSPWLLILLFSWLIFLTML). The interval 36–55 (MPSTQNMCKQEPEPWTWPWA) is disordered.

The protein belongs to the ATPase protein 8 family. Component of the ATP synthase complex composed at least of ATP5F1A/subunit alpha, ATP5F1B/subunit beta, ATP5MC1/subunit c (homooctomer), MT-ATP6/subunit a, MT-ATP8/subunit 8, ATP5ME/subunit e, ATP5MF/subunit f, ATP5MG/subunit g, ATP5MK/subunit k, ATP5MJ/subunit j, ATP5F1C/subunit gamma, ATP5F1D/subunit delta, ATP5F1E/subunit epsilon, ATP5PF/subunit F6, ATP5PB/subunit b, ATP5PD/subunit d, ATP5PO/subunit OSCP. ATP synthase complex consists of a soluble F(1) head domain (subunits alpha(3) and beta(3)) - the catalytic core - and a membrane F(0) domain - the membrane proton channel (subunits c, a, 8, e, f, g, k and j). These two domains are linked by a central stalk (subunits gamma, delta, and epsilon) rotating inside the F1 region and a stationary peripheral stalk (subunits F6, b, d, and OSCP).

The protein resides in the mitochondrion membrane. In terms of biological role, subunit 8, of the mitochondrial membrane ATP synthase complex (F(1)F(0) ATP synthase or Complex V) that produces ATP from ADP in the presence of a proton gradient across the membrane which is generated by electron transport complexes of the respiratory chain. ATP synthase complex consist of a soluble F(1) head domain - the catalytic core - and a membrane F(1) domain - the membrane proton channel. These two domains are linked by a central stalk rotating inside the F(1) region and a stationary peripheral stalk. During catalysis, ATP synthesis in the catalytic domain of F(1) is coupled via a rotary mechanism of the central stalk subunits to proton translocation. In vivo, can only synthesize ATP although its ATP hydrolase activity can be activated artificially in vitro. Part of the complex F(0) domain. This is ATP synthase F(0) complex subunit 8 from Latimeria chalumnae (Coelacanth).